We begin with the raw amino-acid sequence, 430 residues long: Tol-Pal system protein TolB (430 aa).

A signal peptide spans Met-1–Ala-19.

Belongs to the TolB family. In terms of assembly, the Tol-Pal system is composed of five core proteins: the inner membrane proteins TolA, TolQ and TolR, the periplasmic protein TolB and the outer membrane protein Pal. They form a network linking the inner and outer membranes and the peptidoglycan layer.

Its subcellular location is the periplasm. Its function is as follows. Part of the Tol-Pal system, which plays a role in outer membrane invagination during cell division and is important for maintaining outer membrane integrity. The polypeptide is Tol-Pal system protein TolB (Hahella chejuensis (strain KCTC 2396)).